Reading from the N-terminus, the 688-residue chain is Two-component response regulator ORR23 (688 aa).

Positions 25 to 140 (RVLAVDDDPV…ELRNIWQHVI (116 aa)) constitute a Response regulatory domain. D76 is subject to 4-aspartylphosphate. Residues 161–212 (PPNADSDHVHGHVTCGSPDQSGRPSKKRKEYCSEEEDEGEVNTQDIDDPSAP) form a disordered region. Residues 193-208 (SEEEDEGEVNTQDIDD) are compositionally biased toward acidic residues. Residues 211–270 (APKKPRVVWSVELHRKFVAAVNQLGIDKAVPKRILELMNVEKLTRENVASHLQKYRLYLK) constitute a DNA-binding region (myb-like GARP).

It belongs to the ARR family. Type-B subfamily. Two-component system major event consists of a His-to-Asp phosphorelay between a sensor histidine kinase (HK) and a response regulator (RR). In plants, the His-to-Asp phosphorelay involves an additional intermediate named Histidine-containing phosphotransfer protein (HPt). This multistep phosphorelay consists of a His-Asp-His-Asp sequential transfer of a phosphate group between first a His and an Asp of the HK protein, followed by the transfer to a conserved His of the HPt protein and finally the transfer to an Asp in the receiver domain of the RR protein.

It is found in the nucleus. Functionally, transcriptional activator that binds specific DNA sequence. Functions as a response regulator involved in His-to-Asp phosphorelay signal transduction system. Phosphorylation of the Asp residue in the receiver domain activates the ability of the protein to promote the transcription of target genes. May directly activate some type-A response regulators in response to cytokinins. The chain is Two-component response regulator ORR23 from Oryza sativa subsp. japonica (Rice).